The primary structure comprises 262 residues: Lysosomal-associated transmembrane protein 5 (262 aa).

5 helical membrane-spanning segments follow: residues 19–39 (IATTALAIYHVIMSVLLFIEH), 64–84 (ISSFLLITMLFIISLSLLIGV), 92–112 (LLPFLSLQIMDYLLCLLTLLG), 134–154 (FPLMTLQLLDFCLSILTLCSS), and 184–204 (FIKMMIIFSIAFITVLIFKVY). Y259 bears the Phosphotyrosine mark.

It belongs to the LAPTM4/LAPTM5 transporter family. Binds to ubiquitin. Preferentially expressed in adult hematopoietic tissues. High levels in lymphoid and myeloid tissues. Highly expressed in peripheral blood leukocytes, thymus, spleen and lung, followed by placenta, liver and kidney.

The protein resides in the lysosome membrane. In terms of biological role, may have a special functional role during embryogenesis and in adult hematopoietic cells. The protein is Lysosomal-associated transmembrane protein 5 (LAPTM5) of Homo sapiens (Human).